Reading from the N-terminus, the 606-residue chain is ATP-dependent rRNA helicase SPB4 (606 aa).

The short motif at 7-35 (WDNLGFSLLPWIRTGLDVMGFETMTPVQA) is the Q motif element. A Helicase ATP-binding domain is found at 38–224 (IPMLAGNKDV…KTGLRNPVRI (187 aa)). 51–58 (SVTGSGKT) provides a ligand contact to ATP. Positions 172 to 175 (DEAD) match the DEAD box motif. The 157-residue stretch at 248–404 (KLQLLVSILN…ELDLEVKGIT (157 aa)) folds into the Helicase C-terminal domain. At Ser-254 the chain carries Phosphoserine. Residues 539–582 (KTLTKERKLERKEKMSLKRKAIEEELKAEELDENAEEERIKEDW) are a coiled coil.

The protein belongs to the DEAD box helicase family. DDX55/SPB4 subfamily. In terms of assembly, component of pre-60S ribosomal complexes.

It localises to the nucleus. It is found in the nucleolus. The catalysed reaction is ATP + H2O = ADP + phosphate + H(+). In terms of biological role, ATP-binding RNA helicase involved in the biogenesis of 60S ribosomal subunits. Binds 90S pre-ribosomal particles and dissociates from pre-60S ribosomal particles after processing of 27SB pre-rRNA. Required for the normal formation of 18S rRNA through the processing of pre-rRNAs at sites A0, A1 and A2, and the normal formation of 25S and 5.8S rRNAs through the processing of pre-rRNAs at sites C1 and C2. Also required for recruitment of NOG2 to pre-ribosomes. The protein is ATP-dependent rRNA helicase SPB4 of Saccharomyces cerevisiae (strain ATCC 204508 / S288c) (Baker's yeast).